Reading from the N-terminus, the 58-residue chain is Dortoxin (58 aa).

The LCN-type CS-alpha/beta domain occupies 3 to 58 (VPGNYPLDKDGNTYTCLKLGENKDCQKVCKLHGVQYGYCYAFECWCKEYLDDKDSV). 3 cysteine pairs are disulfide-bonded: Cys18–Cys41, Cys27–Cys46, and Cys31–Cys48.

As to expression, expressed by the venom gland.

Its subcellular location is the secreted. Its function is as follows. Binds to sodium channels (Nav) and affects the channel activation process. In mice, causes hyperactivity that persists until death. The chain is Dortoxin from Parabuthus transvaalicus (Transvaal thick-tailed scorpion).